A 368-amino-acid polypeptide reads, in one-letter code: 3-isopropylmalate dehydrogenase (368 aa).

77–88 is an NAD(+) binding site; the sequence is GPKWGTGAVRPE. Residues arginine 95, arginine 105, arginine 134, and aspartate 226 each coordinate substrate. The Mg(2+) site is built by aspartate 226, aspartate 251, and aspartate 255. 290–301 is an NAD(+) binding site; that stretch reads GSAPDLPANKVN.

Belongs to the isocitrate and isopropylmalate dehydrogenases family. As to quaternary structure, homodimer. It depends on Mg(2+) as a cofactor. The cofactor is Mn(2+).

It localises to the cytoplasm. The enzyme catalyses (2R,3S)-3-isopropylmalate + NAD(+) = 4-methyl-2-oxopentanoate + CO2 + NADH. Its pathway is amino-acid biosynthesis; L-leucine biosynthesis; L-leucine from 3-methyl-2-oxobutanoate: step 3/4. Catalyzes the oxidation of 3-carboxy-2-hydroxy-4-methylpentanoate (3-isopropylmalate) to 3-carboxy-4-methyl-2-oxopentanoate. The product decarboxylates to 4-methyl-2 oxopentanoate. The chain is 3-isopropylmalate dehydrogenase (LEU2) from Kodamaea ohmeri (Yeast).